We begin with the raw amino-acid sequence, 594 residues long: ATP-dependent zinc metalloprotease FtsH 1 (594 aa).

Residues 1–2 (MR) are Cytoplasmic-facing. Residues 3–23 (WWAGAALLLAALLFGRPAAAM) traverse the membrane as a helical segment. The Extracellular segment spans residues 24–92 (EAQPVAYSEF…RVEFVRPADP (69 aa)). The helical transmembrane segment at 93 to 113 (IAFRTLLRFIPPLLILGAILW) threads the bilayer. Residues 114–594 (FTRRTAGGSG…ANSRGDEGNQ (481 aa)) lie on the Cytoplasmic side of the membrane. 186–193 (GPPGTGKT) is an ATP binding site. Residue H408 participates in Zn(2+) binding. E409 is a catalytic residue. Residues H412 and D485 each coordinate Zn(2+).

The protein in the central section; belongs to the AAA ATPase family. In the C-terminal section; belongs to the peptidase M41 family. Homohexamer. The cofactor is Zn(2+).

The protein localises to the cell membrane. Acts as a processive, ATP-dependent zinc metallopeptidase for both cytoplasmic and membrane proteins. Plays a role in the quality control of integral membrane proteins. In Symbiobacterium thermophilum (strain DSM 24528 / JCM 14929 / IAM 14863 / T), this protein is ATP-dependent zinc metalloprotease FtsH 1.